The chain runs to 236 residues: Transcriptional activator protein SolR (236 aa).

Residues Val-169–Gly-234 form the HTH luxR-type domain. The H-T-H motif DNA-binding region spans Ala-193–Asn-212.

This sequence belongs to the autoinducer-regulated transcriptional regulatory protein family.

This chain is Transcriptional activator protein SolR (solR), found in Ralstonia solanacearum (Pseudomonas solanacearum).